Consider the following 216-residue polypeptide: Sporozoite antigen (216 aa).

A disordered region spans residues Gln194–Trp216.

The chain is Sporozoite antigen from Eimeria tenella (Coccidian parasite).